A 171-amino-acid chain; its full sequence is 3-hydroxydecanoyl-[acyl-carrier-protein] dehydratase (171 aa).

His-70 is an active-site residue.

This sequence belongs to the thioester dehydratase family. FabA subfamily. As to quaternary structure, homodimer.

It is found in the cytoplasm. It catalyses the reaction a (3R)-hydroxyacyl-[ACP] = a (2E)-enoyl-[ACP] + H2O. It carries out the reaction (3R)-hydroxydecanoyl-[ACP] = (2E)-decenoyl-[ACP] + H2O. The enzyme catalyses (2E)-decenoyl-[ACP] = (3Z)-decenoyl-[ACP]. It participates in lipid metabolism; fatty acid biosynthesis. Necessary for the introduction of cis unsaturation into fatty acids. Catalyzes the dehydration of (3R)-3-hydroxydecanoyl-ACP to E-(2)-decenoyl-ACP and then its isomerization to Z-(3)-decenoyl-ACP. Can catalyze the dehydratase reaction for beta-hydroxyacyl-ACPs with saturated chain lengths up to 16:0, being most active on intermediate chain length. The polypeptide is 3-hydroxydecanoyl-[acyl-carrier-protein] dehydratase (Pseudomonas putida (strain ATCC 700007 / DSM 6899 / JCM 31910 / BCRC 17059 / LMG 24140 / F1)).